Here is a 400-residue protein sequence, read N- to C-terminus: Putative niacin/nicotinamide transporter NiaP (400 aa).

Residues 1 to 14 lie on the Cytoplasmic side of the membrane; the sequence is MGKQQPISQRKLLG. Residues 15–35 form a helical membrane-spanning segment; it reads VAGLGWLFDAMDVGILSFIIA. Residues 36–49 are Extracellular-facing; that stretch reads ALHVEWNLSPEEMK. A helical transmembrane segment spans residues 50 to 70; it reads WIGSVNSIGMAAGAFLFGLLA. Residues 71-77 lie on the Cytoplasmic side of the membrane; that stretch reads DRIGRKK. 2 helical membrane-spanning segments follow: residues 78–98 and 99–119; these read VFII…FVTS and LSAF…ELPV. At 120-142 the chain is on the cytoplasmic side; it reads ASTLVSEAVVPEKRGRVIVLLES. A helical membrane pass occupies residues 143–163; the sequence is FWAVGWLAAALISYFVIPSFG. Residues 164–165 are Extracellular-facing; that stretch reads WQ. Residues 166 to 186 traverse the membrane as a helical segment; sequence AALLLTALTAFYALYLRTSLP. The Cytoplasmic segment spans residues 187-217; it reads DSPKYESLSAKKRSMWENVKSVWARQYIRPT. A helical membrane pass occupies residues 218-238; sequence VMLSIVWFCVVFSYYGMFLWL. Over 239 to 253 the chain is Extracellular; the sequence is PSVMLLKGFSMIQSF. The chain crosses the membrane as a helical span at residues 254 to 274; that stretch reads EYVLLMTLAQLPGYFSAAWLI. Over 275–280 the chain is Cytoplasmic; that stretch reads EKAGRK. Residues 281 to 301 form a helical membrane-spanning segment; it reads WILVVYLIGTAGSAYFFGTAD. The Extracellular segment spans residues 302–304; sequence SLS. The chain crosses the membrane as a helical span at residues 305-325; sequence LLLTAGVLLSFFNLGAWGVLY. Residues 326-343 lie on the Cytoplasmic side of the membrane; that stretch reads AYTPEQYPTAIRATGSGT. The helical transmembrane segment at 344–364 threads the bilayer; it reads TAAFGRIGGIFGPLLVGTLAA. Topologically, residues 365-370 are extracellular; that stretch reads RHISFS. A helical membrane pass occupies residues 371–391; that stretch reads VIFSIFCIAILLAVACILIMG. Residues 392–400 lie on the Cytoplasmic side of the membrane; that stretch reads KETKQTELE.

It belongs to the major facilitator superfamily. Sugar transporter (TC 2.A.1.1) family.

The protein resides in the cell membrane. Its function is as follows. Probably involved in the uptake of amidated and deamidated forms of niacin. Increases the growth rate of E.coli that is unable to make niacin de novo; confers increased sensitivity to the toxic niacin analog 6-amino-nicotinamide to wild-type E.coli. There is probably another mechanism for niacin uptake. This is Putative niacin/nicotinamide transporter NiaP from Bacillus subtilis (strain 168).